A 227-amino-acid polypeptide reads, in one-letter code: Cytochrome c oxidase subunit 2 (227 aa).

Residues 1–14 (MAYPFQLGLQDATS) lie on the Mitochondrial intermembrane side of the membrane. The helical transmembrane segment at 15 to 45 (PIMEELLHFHDHTLMIVFLISSLVLYIITLM) threads the bilayer. The Mitochondrial matrix portion of the chain corresponds to 46 to 59 (LTTKLTHTSTMDAQ). The chain crosses the membrane as a helical span at residues 60-87 (EVETVWTILPAIILILIALPSLRILYMM). The Mitochondrial intermembrane portion of the chain corresponds to 88–227 (DEINNPSLTV…YFETWSALMV (140 aa)). The Cu cation site is built by histidine 161, cysteine 196, glutamate 198, cysteine 200, histidine 204, and methionine 207. Position 198 (glutamate 198) interacts with Mg(2+). Tyrosine 218 bears the Phosphotyrosine mark.

It belongs to the cytochrome c oxidase subunit 2 family. As to quaternary structure, component of the cytochrome c oxidase (complex IV, CIV), a multisubunit enzyme composed of 14 subunits. The complex is composed of a catalytic core of 3 subunits MT-CO1, MT-CO2 and MT-CO3, encoded in the mitochondrial DNA, and 11 supernumerary subunits COX4I, COX5A, COX5B, COX6A, COX6B, COX6C, COX7A, COX7B, COX7C, COX8 and NDUFA4, which are encoded in the nuclear genome. The complex exists as a monomer or a dimer and forms supercomplexes (SCs) in the inner mitochondrial membrane with NADH-ubiquinone oxidoreductase (complex I, CI) and ubiquinol-cytochrome c oxidoreductase (cytochrome b-c1 complex, complex III, CIII), resulting in different assemblies (supercomplex SCI(1)III(2)IV(1) and megacomplex MCI(2)III(2)IV(2)). Found in a complex with TMEM177, COA6, COX18, COX20, SCO1 and SCO2. Interacts with TMEM177 in a COX20-dependent manner. Interacts with COX20. Interacts with COX16. Requires Cu cation as cofactor.

The protein resides in the mitochondrion inner membrane. The catalysed reaction is 4 Fe(II)-[cytochrome c] + O2 + 8 H(+)(in) = 4 Fe(III)-[cytochrome c] + 2 H2O + 4 H(+)(out). Component of the cytochrome c oxidase, the last enzyme in the mitochondrial electron transport chain which drives oxidative phosphorylation. The respiratory chain contains 3 multisubunit complexes succinate dehydrogenase (complex II, CII), ubiquinol-cytochrome c oxidoreductase (cytochrome b-c1 complex, complex III, CIII) and cytochrome c oxidase (complex IV, CIV), that cooperate to transfer electrons derived from NADH and succinate to molecular oxygen, creating an electrochemical gradient over the inner membrane that drives transmembrane transport and the ATP synthase. Cytochrome c oxidase is the component of the respiratory chain that catalyzes the reduction of oxygen to water. Electrons originating from reduced cytochrome c in the intermembrane space (IMS) are transferred via the dinuclear copper A center (CU(A)) of subunit 2 and heme A of subunit 1 to the active site in subunit 1, a binuclear center (BNC) formed by heme A3 and copper B (CU(B)). The BNC reduces molecular oxygen to 2 water molecules using 4 electrons from cytochrome c in the IMS and 4 protons from the mitochondrial matrix. The polypeptide is Cytochrome c oxidase subunit 2 (MT-CO2) (Vulpes macrotis (Kit fox)).